The chain runs to 296 residues: Glycine--tRNA ligase alpha subunit (296 aa).

The protein belongs to the class-II aminoacyl-tRNA synthetase family. As to quaternary structure, tetramer of two alpha and two beta subunits.

Its subcellular location is the cytoplasm. It catalyses the reaction tRNA(Gly) + glycine + ATP = glycyl-tRNA(Gly) + AMP + diphosphate. The sequence is that of Glycine--tRNA ligase alpha subunit from Synechococcus sp. (strain WH7803).